The following is a 391-amino-acid chain: 3-ketoacyl-CoA thiolase (391 aa).

The active-site Acyl-thioester intermediate is C95. Active-site proton acceptor residues include H347 and C377.

It belongs to the thiolase-like superfamily. Thiolase family. As to quaternary structure, heterotetramer of two alpha chains (FadB) and two beta chains (FadA).

It localises to the cytoplasm. It catalyses the reaction an acyl-CoA + acetyl-CoA = a 3-oxoacyl-CoA + CoA. Its pathway is lipid metabolism; fatty acid beta-oxidation. Its function is as follows. Catalyzes the final step of fatty acid oxidation in which acetyl-CoA is released and the CoA ester of a fatty acid two carbons shorter is formed. The chain is 3-ketoacyl-CoA thiolase from Marinomonas sp. (strain MWYL1).